Here is a 514-residue protein sequence, read N- to C-terminus: Deoxynucleoside triphosphate triphosphohydrolase SAMHD1 homolog (514 aa).

Residues 1-24 (MNNTFKYVNEDVSGTEGEESDYDP) are disordered. Lys80 contacts GTP. Residue Asn83 participates in a 2'-deoxyribonucleoside 5'-triphosphate binding. 101–109 (DTEQFQRLR) is a binding site for GTP. Residues Gln113 and Arg128 each coordinate substrate. An HD domain is found at 128–259 (RFEHSIGVSH…SVDVDKFDYL (132 aa)). Positions 131, 170, and 171 each coordinate Zn(2+). His174 is a substrate binding site. Residue His196 is part of the active site. Substrate is bound by residues 252-258 (DVDKFDY), Tyr258, and Asp262. Asp254 contacts Zn(2+). A 2'-deoxyribonucleoside 5'-triphosphate-binding positions include Arg276, 291–293 (LSK), and Asn297. Residues Arg305 and 309–314 (HKLVYT) contribute to the substrate site. A 2'-deoxyribonucleoside 5'-triphosphate is bound by residues His315 and Lys316. Residues Arg380 and Lys384 each coordinate GTP.

It belongs to the SAMHD1 family. In terms of assembly, homodimer; in absence of GTP and dNTP. Homotetramer; in GTP- and dNTP-bound form. Zn(2+) serves as cofactor.

It catalyses the reaction a 2'-deoxyribonucleoside 5'-triphosphate + H2O = a 2'-deoxyribonucleoside + triphosphate + H(+). Allosterically activated and regulated via the combined actions of GTP and dNTPs (dATP, dGTP, dTTP and dCTP): Allosteric site 1 binds GTP, while allosteric site 2 binds dNTP. Allosteric activation promotes the formation of highly active homotetramers. Functionally, has deoxynucleoside triphosphate (dNTPase) activity. The polypeptide is Deoxynucleoside triphosphate triphosphohydrolase SAMHD1 homolog (Dictyostelium discoideum (Social amoeba)).